Here is a 574-residue protein sequence, read N- to C-terminus: Probable inactive serine/threonine-protein kinase slob2 (574 aa).

A helical membrane pass occupies residues 6-26 (YIIIAAVGGFAILTFIIIVVL). The region spanning 166-346 (YADRGSLRDF…PLHRLTYTSR (181 aa)) is the Protein kinase domain. N-linked (GlcNAc...) asparagine glycosylation is present at N358. The disordered stretch occupies residues 366 to 386 (SKPNSKDLSQPKLKDLKKQKK). N-linked (GlcNAc...) asparagine glycans are attached at residues N440, N449, N453, N456, N464, N470, N477, and N483. The span at 450 to 493 (TTTNTTNTSTSSSLNSSFNSNVSTSYSNATTTTNTTSASSVSPP) shows a compositional bias: low complexity. Positions 450–574 (TTTNTTNTST…DKSGPLLKKS (125 aa)) are disordered. The span at 494–539 (ISSPPPPPPPPPPSKSSGPPPPPPPPPKSSGPPPPPPPKSSPPPPA) shows a compositional bias: pro residues. A compositionally biased stretch (low complexity) spans 546–556 (LLSSIESFSSS).

This sequence belongs to the protein kinase superfamily. Ser/Thr protein kinase family.

Its subcellular location is the membrane. The protein is Probable inactive serine/threonine-protein kinase slob2 (slob2) of Dictyostelium discoideum (Social amoeba).